The chain runs to 122 residues: Double-headed protease inhibitor, submandibular gland (122 aa).

Kazal-like domains lie at 10 to 70 and 71 to 121; these read GGRK…ECDI and ECTQ…QCQS. Disulfide bonds link C16/C50, C28/C47, C36/C68, C72/C101, C79/C98, and C87/C119.

The protein resides in the secreted. In terms of biological role, this inhibitor is composed of two homologous actively inhibiting halves: one which inhibits trypsin, the other which inhibits elastase. The sequence is that of Double-headed protease inhibitor, submandibular gland from Martes martes (European pine marten).